The primary structure comprises 150 residues: MQIWVDADACPGVIKEIIYRAAERRQIQTTLVANQMLRTPPSKYIRAIQVAHGFDVADAHIVDQVVAGDLVVTADIPLASLVIERGAHALNPRGEMYTTANIRERLTMRNFMEDLRSAGVQTGGPNAFSQADRQAFANQLDRFLAKIPVA.

Belongs to the UPF0178 family.

The polypeptide is UPF0178 protein Daro_2879 (Dechloromonas aromatica (strain RCB)).